The chain runs to 126 residues: C-type natriuretic peptide (126 aa).

The first 23 residues, 1–23 (MHLSQLLACALLLSLLSLRPSEA), serve as a signal peptide directing secretion. The tract at residues 20-71 (PSEAKPGAPPKVPRTPPGEEVAEPQAAGGGQKKGDKTPGGGGANLKDDRSRL) is disordered. Positions 24–73 (KPGAPPKVPRTPPGEEVAEPQAAGGGQKKGDKTPGGGGANLKDDRSRLLR) are excised as a propeptide. Positions 26–35 (GAPPKVPRTP) are enriched in pro residues. Gly residues predominate over residues 46 to 62 (AGGGQKKGDKTPGGGGA). A disulfide bridge links Cys-110 with Cys-126.

The protein belongs to the natriuretic peptide family. Degraded by IDE (in vitro).

The protein localises to the secreted. In terms of biological role, hormone which plays a role in endochondral ossification through regulation of cartilaginous growth plate chondrocytes proliferation and differentiation. May also be vasoactive and natriuretic. Acts by specifically binding and stimulating NPR2 to produce cGMP. Binds the clearance receptor NPR3. The polypeptide is C-type natriuretic peptide (NPPC) (Ovis aries (Sheep)).